The following is a 218-amino-acid chain: Protein N-lysine methyltransferase METTL21A (218 aa).

S-adenosyl-L-methionine-binding positions include Trp-47, 73 to 75 (GAG), Asp-94, Trp-125, and Ala-143.

This sequence belongs to the methyltransferase superfamily. METTL21 family.

It localises to the cytoplasm. It carries out the reaction L-lysyl-[protein] + 3 S-adenosyl-L-methionine = N(6),N(6),N(6)-trimethyl-L-lysyl-[protein] + 3 S-adenosyl-L-homocysteine + 3 H(+). In terms of biological role, protein-lysine methyltransferase that selectively trimethylates residues in heat shock protein 70 (HSP70) family members. This Danio rerio (Zebrafish) protein is Protein N-lysine methyltransferase METTL21A (mettl21a).